An 84-amino-acid chain; its full sequence is MSGNTGERSFADIITSIRYWVIHSITIPSLFIAGWLFVSTGLAYDVFGSPRPNEYFTENQQGIPLITGRFEPLEEQNEFSRRSQ.

The chain crosses the membrane as a helical span at residues 21-35; sequence VIHSITIPSLFIAGW. H23 contacts heme.

Belongs to the PsbE/PsbF family. In terms of assembly, heterodimer of an alpha subunit and a beta subunit. PSII is composed of 1 copy each of membrane proteins PsbA, PsbB, PsbC, PsbD, PsbE, PsbF, PsbH, PsbI, PsbJ, PsbK, PsbL, PsbM, PsbT, PsbX, PsbY, PsbZ, Psb30/Ycf12, at least 3 peripheral proteins of the oxygen-evolving complex and a large number of cofactors. It forms dimeric complexes. Heme b is required as a cofactor.

The protein localises to the plastid membrane. Its function is as follows. This b-type cytochrome is tightly associated with the reaction center of photosystem II (PSII). PSII is a light-driven water:plastoquinone oxidoreductase that uses light energy to abstract electrons from H(2)O, generating O(2) and a proton gradient subsequently used for ATP formation. It consists of a core antenna complex that captures photons, and an electron transfer chain that converts photonic excitation into a charge separation. The chain is Cytochrome b559 subunit alpha from Cuscuta gronovii (Common dodder).